A 226-amino-acid polypeptide reads, in one-letter code: Transmembrane protein 204 (226 aa).

The Cytoplasmic segment spans residues 1–5 (MTVQR). Residues 6–26 (LVAAAVLVALVSLILNNVAAF) form a helical membrane-spanning segment. Topologically, residues 27–103 (TSNWVCQTLE…LQFDMMRACN (77 aa)) are extracellular. A helical membrane pass occupies residues 104–124 (LVATAALTAGQLTFLLGLVGL). The Cytoplasmic segment spans residues 125–136 (PLLSPDAPCWEE). Residues 137 to 157 (AMAAAFQLASFVLVIGLVTFY) form a helical membrane-spanning segment. The Extracellular segment spans residues 158–170 (RIGPYTNLSWSCY). Asn-164 is a glycosylation site (N-linked (GlcNAc...) asparagine). Residues 171 to 191 (LNIGACLLATLAAAMLIWNIL) form a helical membrane-spanning segment. Residues 192-226 (HKREDCMAPRVIVISRSLTARFRRGLDNDYVESPC) are Cytoplasmic-facing.

In terms of tissue distribution, highly expressed in lung, heart, kidney and placenta. Lower expression in thymus, spleen, liver, testis and ovary. Expressed in endothelial and restricted epithelial cell populations.

The protein resides in the cell junction. It is found in the adherens junction. It localises to the cell membrane. Can influence paracellular permeability. Appears to be involved in cell-cell interactions through adherens. The polypeptide is Transmembrane protein 204 (TMEM204) (Homo sapiens (Human)).